The sequence spans 409 residues: tRNA(Met) cytidine acetate ligase (409 aa).

ATP contacts are provided by residues 7–20 (VVEY…HLYH), Gly-102, Asn-169, and Arg-194.

The protein belongs to the TmcAL family.

It localises to the cytoplasm. The catalysed reaction is cytidine(34) in elongator tRNA(Met) + acetate + ATP = N(4)-acetylcytidine(34) in elongator tRNA(Met) + AMP + diphosphate. In terms of biological role, catalyzes the formation of N(4)-acetylcytidine (ac(4)C) at the wobble position of elongator tRNA(Met), using acetate and ATP as substrates. First activates an acetate ion to form acetyladenylate (Ac-AMP) and then transfers the acetyl group to tRNA to form ac(4)C34. The polypeptide is tRNA(Met) cytidine acetate ligase (Clostridium botulinum (strain Langeland / NCTC 10281 / Type F)).